Here is a 568-residue protein sequence, read N- to C-terminus: 3-(3-hydroxy-phenyl)propionate/3-hydroxycinnamic acid hydroxylase (568 aa).

FAD contacts are provided by residues 13-42 (DVVIVGAGPVGLTLANILGLQGVRTMIVEE) and 278-288 (FRKGRMFLAGD).

The protein belongs to the PheA/TfdB FAD monooxygenase family. It depends on FAD as a cofactor.

The enzyme catalyses 3-(3-hydroxyphenyl)propanoate + NADH + O2 + H(+) = 3-(2,3-dihydroxyphenyl)propanoate + NAD(+) + H2O. It catalyses the reaction (2E)-3-(3-hydroxyphenyl)prop-2-enoate + NADH + O2 + H(+) = (2E)-3-(2,3-dihydroxyphenyl)prop-2-enoate + NAD(+) + H2O. Its pathway is aromatic compound metabolism; 3-phenylpropanoate degradation. In terms of biological role, catalyzes the insertion of one atom of molecular oxygen into position 2 of the phenyl ring of 3-(3-hydroxyphenyl)propionate (3-HPP) and hydroxycinnamic acid (3HCI). The chain is 3-(3-hydroxy-phenyl)propionate/3-hydroxycinnamic acid hydroxylase from Mycobacterium sp. (strain JLS).